Reading from the N-terminus, the 782-residue chain is Chaoptin (782 aa).

LRR repeat units lie at residues S16–A37, R43–F64, S67–G88, D93–D114, Q117–N138, S141–N162, E165–Q186, G191–P212, N224–P245, S249–N270, H273–N294, K297–F318, N321–E342, G344–S364, T370–A391, C395–G416, R419–G442, T446–N467, L468–N488, S491–L512, E514–G535, and Q539–K560. N196, N234, and N262 each carry an N-linked (GlcNAc...) asparagine glycan. N-linked (GlcNAc...) asparagine glycosylation is found at N454 and N488. An N-linked (GlcNAc...) asparagine glycan is attached at N530. N618, N648, and N667 each carry an N-linked (GlcNAc...) asparagine glycan.

This sequence belongs to the chaoptin family.

Its subcellular location is the cell membrane. In terms of biological role, required for photoreceptor cell morphogenesis. Mediates homophilic cellular adhesion. The sequence is that of Chaoptin (CHP) from Tribolium castaneum (Red flour beetle).